A 95-amino-acid polypeptide reads, in one-letter code: Large ribosomal subunit protein uL23 (95 aa).

The protein belongs to the universal ribosomal protein uL23 family. As to quaternary structure, part of the 50S ribosomal subunit. Contacts protein L29, and trigger factor when it is bound to the ribosome.

Its function is as follows. One of the early assembly proteins it binds 23S rRNA. One of the proteins that surrounds the polypeptide exit tunnel on the outside of the ribosome. Forms the main docking site for trigger factor binding to the ribosome. The protein is Large ribosomal subunit protein uL23 of Pediococcus pentosaceus (strain ATCC 25745 / CCUG 21536 / LMG 10740 / 183-1w).